A 607-amino-acid polypeptide reads, in one-letter code: UvrABC system protein C (607 aa).

In terms of domain architecture, GIY-YIG spans 11 to 89 (CKPGVYRFED…IKEFAPPCNV (79 aa)). A UVR domain is found at 201 to 236 (SSLLESLKKKMLKASKNKEYEEAAILRDKIQAAQTV).

Belongs to the UvrC family. As to quaternary structure, interacts with UvrB in an incision complex.

It is found in the cytoplasm. The UvrABC repair system catalyzes the recognition and processing of DNA lesions. UvrC both incises the 5' and 3' sides of the lesion. The N-terminal half is responsible for the 3' incision and the C-terminal half is responsible for the 5' incision. The chain is UvrABC system protein C from Tropheryma whipplei (strain Twist) (Whipple's bacillus).